A 357-amino-acid polypeptide reads, in one-letter code: Arginine kinase (357 aa).

Residues 9-91 (KLEAGFKKLQ…FNPIIEDYHE (83 aa)) form the Phosphagen kinase N-terminal domain. Residue 64–66 (GVG) participates in L-arginine binding. A Phosphagen kinase C-terminal domain is found at 119-356 (YVVSTHVRCG…LEMIKMEEAA (238 aa)). ATP contacts are provided by residues 122-126 (STHVR) and His-185. Glu-225 serves as a coordination point for L-arginine. Arg-229 contributes to the ATP binding site. Cys-271 is a binding site for L-arginine. Residues 280 to 284 (RASVH) and 309 to 314 (RGTRGE) each bind ATP.

This sequence belongs to the ATP:guanido phosphotransferase family.

The enzyme catalyses L-arginine + ATP = N(omega)-phospho-L-arginine + ADP + H(+). Functionally, catalyzes the reversible transfer of high energy ATP gamma-phosphate group to L-arginine. The sequence is that of Arginine kinase from Polybetes pythagoricus (South American huntsman spider).